The chain runs to 238 residues: Large ribosomal subunit protein uL1 (238 aa).

It belongs to the universal ribosomal protein uL1 family. As to quaternary structure, part of the 50S ribosomal subunit.

Its function is as follows. Binds directly to 23S rRNA. The L1 stalk is quite mobile in the ribosome, and is involved in E site tRNA release. In terms of biological role, protein L1 is also a translational repressor protein, it controls the translation of the L11 operon by binding to its mRNA. The sequence is that of Large ribosomal subunit protein uL1 from Salinispora arenicola (strain CNS-205).